The sequence spans 653 residues: UvrABC system protein C (653 aa).

The 79-residue stretch at 44 to 122 (NAPGVYRMVN…IKRLRPRFNV (79 aa)) folds into the GIY-YIG domain. One can recognise a UVR domain in the interval 232 to 267 (STVKAEIATAMQEASQALDFERAAIYRDRLAALSHV).

This sequence belongs to the UvrC family. In terms of assembly, interacts with UvrB in an incision complex.

Its subcellular location is the cytoplasm. Functionally, the UvrABC repair system catalyzes the recognition and processing of DNA lesions. UvrC both incises the 5' and 3' sides of the lesion. The N-terminal half is responsible for the 3' incision and the C-terminal half is responsible for the 5' incision. The sequence is that of UvrABC system protein C from Chelativorans sp. (strain BNC1).